The chain runs to 452 residues: AP-4 complex subunit mu-1 (452 aa).

An MHD domain is found at 184–451; that stretch reads KNEVFLDVVE…LSHSDAYVIR (268 aa).

This sequence belongs to the adaptor complexes medium subunit family. In terms of assembly, adaptor protein complex 4 (AP-4) is a heterotetramer composed of two large adaptins (epsilon-type subunit AP4E1 and beta-type subunit AP4B1), a medium adaptin (mu-type subunit AP4M1) and a small adaptin (sigma-type AP4S1). Interacts with tyrosine-based sorting signals on the cytoplasmic tail of cargo proteins such as APP, ATG9A, LAMP2 and NAGPA. Interacts with the C-terminal domain of GRID2. Interacts with GRIA1 and GRIA2; the interaction is indirect via CACNG3. Interacts with CACNG3; CACNG3 associates GRIA1 and GRIA2 with the adaptor protein complex 4 (AP-4) to target them to the somatodendritic compartment of neurons. Interacts with HOOK1 and HOOK2; the interactions are direct, mediate the interaction between FTS-Hook-FHIP (FHF) complex and AP-4 and the perinuclear distribution of AP-4.

It is found in the golgi apparatus. The protein resides in the trans-Golgi network membrane. Its subcellular location is the early endosome. Its function is as follows. Component of the adaptor protein complex 4 (AP-4). Adaptor protein complexes are vesicle coat components involved both in vesicle formation and cargo selection. They control the vesicular transport of proteins in different trafficking pathways. AP-4 forms a non clathrin-associated coat on vesicles departing the trans-Golgi network (TGN) and may be involved in the targeting of proteins from the trans-Golgi network (TGN) to the endosomal-lysosomal system. It is also involved in protein sorting to the basolateral membrane in epithelial cells and the proper asymmetric localization of somatodendritic proteins in neurons. Within AP-4, the mu-type subunit AP4M1 is directly involved in the recognition and binding of tyrosine-based sorting signals found in the cytoplasmic part of cargos. The adaptor protein complex 4 (AP-4) may also recognize other types of sorting signal. In Bos taurus (Bovine), this protein is AP-4 complex subunit mu-1.